The primary structure comprises 181 residues: UPF0232 protein MAP_0004 (181 aa).

Over residues 1 to 11 the composition is skewed to polar residues; sequence MSDDQSPSPSG. 2 disordered regions span residues 1–70 and 161–181; these read MSDD…PQPL and APSWRKGPRHIAGRGPRDTYG. Over residues 18-39 the composition is skewed to basic and acidic residues; that stretch reads LVRRTLEEARAAARAQGKDAGR. Low complexity predominate over residues 40-50; sequence GRAAAPTPRRV.

This sequence belongs to the UPF0232 family.

The sequence is that of UPF0232 protein MAP_0004 from Mycolicibacterium paratuberculosis (strain ATCC BAA-968 / K-10) (Mycobacterium paratuberculosis).